Here is a 325-residue protein sequence, read N- to C-terminus: 5-dehydro-2-deoxygluconokinase (325 aa).

Belongs to the carbohydrate kinase PfkB family.

The enzyme catalyses 5-dehydro-2-deoxy-D-gluconate + ATP = 6-phospho-5-dehydro-2-deoxy-D-gluconate + ADP + H(+). It functions in the pathway polyol metabolism; myo-inositol degradation into acetyl-CoA; acetyl-CoA from myo-inositol: step 5/7. Functionally, catalyzes the phosphorylation of 5-dehydro-2-deoxy-D-gluconate (2-deoxy-5-keto-D-gluconate or DKG) to 6-phospho-5-dehydro-2-deoxy-D-gluconate (DKGP). This chain is 5-dehydro-2-deoxygluconokinase, found in Listeria monocytogenes serotype 4a (strain HCC23).